The chain runs to 233 residues: Large ribosomal subunit protein uL1 (233 aa).

Belongs to the universal ribosomal protein uL1 family. In terms of assembly, part of the 50S ribosomal subunit.

In terms of biological role, binds directly to 23S rRNA. The L1 stalk is quite mobile in the ribosome, and is involved in E site tRNA release. Functionally, protein L1 is also a translational repressor protein, it controls the translation of the L11 operon by binding to its mRNA. The protein is Large ribosomal subunit protein uL1 of Shewanella sp. (strain MR-4).